Reading from the N-terminus, the 952-residue chain is RNA polymerase-associated protein RapA (952 aa).

Positions 164-334 (EVGRRYAPRV…FARLRLLDPD (171 aa)) constitute a Helicase ATP-binding domain. ATP is bound at residue 177 to 184 (DEVGLGKT). The DEAH box motif lies at 280–283 (DEAH). In terms of domain architecture, Helicase C-terminal spans 492 to 668 (RVNWLLELLK…GKSDGLESLI (177 aa)).

The protein belongs to the SNF2/RAD54 helicase family. RapA subfamily. As to quaternary structure, interacts with the RNAP. Has a higher affinity for the core RNAP than for the holoenzyme. Its ATPase activity is stimulated by binding to RNAP.

Its function is as follows. Transcription regulator that activates transcription by stimulating RNA polymerase (RNAP) recycling in case of stress conditions such as supercoiled DNA or high salt concentrations. Probably acts by releasing the RNAP, when it is trapped or immobilized on tightly supercoiled DNA. Does not activate transcription on linear DNA. Probably not involved in DNA repair. This chain is RNA polymerase-associated protein RapA, found in Aliivibrio fischeri (strain ATCC 700601 / ES114) (Vibrio fischeri).